A 103-amino-acid polypeptide reads, in one-letter code: Small ribosomal subunit protein uS10 (103 aa).

Belongs to the universal ribosomal protein uS10 family. In terms of assembly, part of the 30S ribosomal subunit.

Its function is as follows. Involved in the binding of tRNA to the ribosomes. In Campylobacter lari (strain RM2100 / D67 / ATCC BAA-1060), this protein is Small ribosomal subunit protein uS10.